The chain runs to 431 residues: Protein S-Myc (431 aa).

A Phosphotyrosine; by Tyr-kinases modification is found at Tyr36. Residues 348–400 (ERRRNHNRMERQRRDIMRSSFLNLRDLVPELVHNEKAAKVVILKKATEYIHTL) form the bHLH domain. Residues 400-421 (LQADESKLLVERKKLYERQQQL) are leucine-zipper.

As to quaternary structure, efficient DNA binding requires dimerization with another bHLH protein.

Its subcellular location is the nucleus. In terms of biological role, has apoptosis-inducing activity. This Mus musculus (Mouse) protein is Protein S-Myc (Mycs).